An 851-amino-acid polypeptide reads, in one-letter code: DNA mismatch repair protein MutS (851 aa).

602-609 is an ATP binding site; sequence GPNMSGKS.

Belongs to the DNA mismatch repair MutS family.

Functionally, this protein is involved in the repair of mismatches in DNA. It is possible that it carries out the mismatch recognition step. This protein has a weak ATPase activity. The protein is DNA mismatch repair protein MutS of Streptococcus pyogenes serotype M6 (strain ATCC BAA-946 / MGAS10394).